We begin with the raw amino-acid sequence, 200 residues long: Prophage tail fiber assembly protein homolog TfaE (200 aa).

It belongs to the tfa family.

The protein is Prophage tail fiber assembly protein homolog TfaE (tfaE) of Escherichia coli (strain K12).